A 401-amino-acid polypeptide reads, in one-letter code: Secreted LysM effector Blys8 (401 aa).

The N-terminal stretch at 1–19 is a signal peptide; it reads MRTLAIFFIGAAVAAHVSP. One can recognise a LysM 1 domain in the interval 42–89; the sequence is TYYDEAYDKSYTCDDLLSAWVISKQDFESWNPAVGSDCKLVLGHSYCV. Low complexity predominate over residues 98–136; that stretch reads STTTTTTTSTTTKTTTKTTTTTTAAPKPTSSAPSGPSPT. The disordered stretch occupies residues 98–137; sequence STTTTTTTSTTTKTTTKTTTTTTAAPKPTSSAPSGPSPTQ. The LysM 2 domain maps to 146–193; the sequence is AYYFVKAGDTCDKISQMYGTFSTAQFIEWNPAVGSSCTGLWAGYYYCV. Residues 201 to 223 are disordered; it reads SRTSTAGPTSTKPANGVTTPQPT. One can recognise a LysM 3 domain in the interval 233–279; that stretch reads QFVYVQPGDQCGTVASRAGVSLSDFLQWNPSTGKDCSGLWANAYACV.

Belongs to the secreted LysM effector family.

Might have a role in sequestration of chitin oligosaccharides (breakdown products of fungal cell walls that are released during invasion and act as triggers of host immunity) to dampen host defense. The polypeptide is Secreted LysM effector Blys8 (Beauveria bassiana (strain ARSEF 2860) (White muscardine disease fungus)).